A 462-amino-acid polypeptide reads, in one-letter code: Steroidogenic factor 1 (462 aa).

A DNA-binding region (nuclear receptor) is located at residues 10 to 85 (DELCPVCGDK…VGMRLEAVRA (76 aa)). An NR C4-type zinc finger spans residues 13 to 33 (CPVCGDKVSGYHYGLLTCESC). Lys-34, Lys-38, and Lys-72 each carry N6-acetyllysine. An NR C4-type zinc finger spans residues 49-73 (CTESQSCKIDKTQRKRCPFCRFQKC). The tract at residues 117 to 149 (GFKLETGPPMGVPPPPPPPPDYMLPPSLHAPEP) is disordered. Lys-119 participates in a covalent cross-link: Glycyl lysine isopeptide (Lys-Gly) (interchain with G-Cter in SUMO). Residues 126-139 (MGVPPPPPPPPDYM) are compositionally biased toward pro residues. Lys-194 participates in a covalent cross-link: Glycyl lysine isopeptide (Lys-Gly) (interchain with G-Cter in SUMO). At Ser-203 the chain carries Phosphoserine; by CDK7. Residues 223 to 460 (NVPELILQLL…NLLIEMLQAK (238 aa)) enclose the NR LBD domain. Residues Gly-342, Tyr-437, and Lys-441 each coordinate a 1,2-diacyl-sn-glycero-3-phosphocholine.

It belongs to the nuclear hormone receptor family. NR5 subfamily. In terms of assembly, binds DNA as a monomer. Part of a complex consisting of SFPQ, NONO and NR5A1. Interacts with NR0B2, NCOA2 and PPARGC1A. Interacts with DGKQ and CDK7. Binds to and activated by HIPK3. In terms of processing, acetylation stimulates the transcriptional activity. Post-translationally, sumoylation reduces CDK7-mediated phosphorylation on Ser-203. Phosphorylated on Ser-203 by CDK7. This phosphorylation promotes transcriptional activity.

It is found in the nucleus. In terms of biological role, transcriptional activator. Seems to be essential for sexual differentiation and formation of the primary steroidogenic tissues. Binds to the Ad4 site found in the promoter region of steroidogenic P450 genes such as CYP11A, CYP11B and CYP21B. Also regulates the AMH/Muellerian inhibiting substance gene as well as the AHCH and STAR genes. 5'-YCAAGGYC-3' and 5'-RRAGGTCA-3' are the consensus sequences for the recognition by NR5A1. The SFPQ-NONO-NR5A1 complex binds to the CYP17 promoter and regulates basal and cAMP-dependent transcriptional activity. Binds phosphatidylcholine and phospholipids with a phosphatidylinositol (PI) headgroup, in particular PI(3,4)P2 and PI(3,4,5)P3. Activated by the phosphorylation of NR5A1 by HIPK3 leading to increased steroidogenic gene expression upon cAMP signaling pathway stimulation. In Rattus norvegicus (Rat), this protein is Steroidogenic factor 1 (Nr5a1).